The chain runs to 614 residues: DNA repair protein rad26 (614 aa).

Positions 29 to 43 (QAQTQVQAQSSQVVV) are enriched in low complexity. Disordered regions lie at residues 29–76 (QAQT…QASL) and 157–214 (KKMK…TAED). Polar residues-rich tracts occupy residues 50 to 76 (QNLN…QASL) and 181 to 190 (LLSSSDQLAK). Over residues 191 to 207 (STKHAAKNSPSKKKRKT) the composition is skewed to basic residues.

Interacts with cds1.

The protein resides in the nucleus. Its function is as follows. Involved in cell cycle arrest when DNA synthesis is inhibited by hydroxyurea, and in mitosis arrest after treatment with DNA-damaging agents. This protein is S phase-specific. The sequence is that of DNA repair protein rad26 (rad26) from Schizosaccharomyces pombe (strain 972 / ATCC 24843) (Fission yeast).